Here is a 187-residue protein sequence, read N- to C-terminus: MPNQEKMEKAIYQFLEALGENPDREGLKDTPKRVAKMYIEMFSGLNQDPKEQFTAVFSENHEEVVIVKDIPFYSMCEHHLVPFYGKAHIAYLPNDGRVTGLSKLARAFEVASKRPQLQERLTAQVAQALEDALAPKGIFVMIEAEHMCMTMRGIKKPGSKTITTVARGLYKDDRYERQEILSLIQKG.

Zn(2+) is bound by residues cysteine 76, histidine 79, and cysteine 148.

The protein belongs to the GTP cyclohydrolase I family. In terms of assembly, toroid-shaped homodecamer, composed of two pentamers of five dimers.

The enzyme catalyses GTP + H2O = 7,8-dihydroneopterin 3'-triphosphate + formate + H(+). Its pathway is cofactor biosynthesis; 7,8-dihydroneopterin triphosphate biosynthesis; 7,8-dihydroneopterin triphosphate from GTP: step 1/1. The protein is GTP cyclohydrolase 1 of Streptococcus agalactiae serotype III (strain NEM316).